The sequence spans 481 residues: Sphingosine kinase 2 (481 aa).

The DAGKc domain occupies 111-253 (GRPKRLLVFV…VDVATIAQGN (143 aa)). Residues 121–123 (NPF) and Thr-153 each bind ATP. Position 178–181 (178–181 (SGDG)) interacts with substrate. Catalysis depends on Asp-180, which acts as the Proton donor/acceptor. Residues Glu-185 and 210–212 (GTG) each bind ATP. Asp-271 contributes to the substrate binding site. ATP contacts are provided by residues Arg-278, Arg-284, and 441-443 (DGE).

Mg(2+) is required as a cofactor. In terms of tissue distribution, highly expressed in flowers and siliques and at lower levels in roots, leaves and stems.

It localises to the vacuole membrane. The catalysed reaction is a sphingoid base + ATP = a sphingoid 1-phosphate + ADP + H(+). Activated by phosphatidic acid (PA). Binding with PA stimulates the activity by promoting the binding of substrate to the catalytic site. Its function is as follows. Involved in the production of sphingolipid metabolites. Phosphorylates sphingosine and various l sphingoid long-chain base (LCB) products, such as phytosphingosine (PHS, 4-hydroxysphinganine), 4-hydroxy-8-sphingenine, 4,8-sphingadienine and D-erythro-dihydrosphingosine, but has a very few activity toward D,L-threo- dihydrosphingosine. Is required for abscisic acid (ABA) signaling that mediates stomatal closure, inhibition of seed germination and root elongation. May function upstream of PLDALPHA1 and phosphatidic acid (PA) in an amplification response to ABA that mediates stomatal closure. The protein is Sphingosine kinase 2 (SPHK2) of Arabidopsis thaliana (Mouse-ear cress).